The sequence spans 285 residues: Small ribosomal subunit biogenesis GTPase RsgA (285 aa).

In terms of domain architecture, CP-type G spans Lys61–Phe215. GTP is bound by residues Thr110–Asp113 and Gly159–Ser167. Zn(2+)-binding residues include Cys239, Cys244, His246, and Cys254.

It belongs to the TRAFAC class YlqF/YawG GTPase family. RsgA subfamily. As to quaternary structure, monomer. Associates with 30S ribosomal subunit, binds 16S rRNA. The cofactor is Zn(2+).

The protein localises to the cytoplasm. Its function is as follows. One of several proteins that assist in the late maturation steps of the functional core of the 30S ribosomal subunit. Helps release RbfA from mature subunits. May play a role in the assembly of ribosomal proteins into the subunit. Circularly permuted GTPase that catalyzes slow GTP hydrolysis, GTPase activity is stimulated by the 30S ribosomal subunit. This chain is Small ribosomal subunit biogenesis GTPase RsgA, found in Mesomycoplasma hyopneumoniae (strain J / ATCC 25934 / NCTC 10110) (Mycoplasma hyopneumoniae).